The sequence spans 186 residues: Elongation factor P (186 aa).

The protein belongs to the elongation factor P family.

It localises to the cytoplasm. It participates in protein biosynthesis; polypeptide chain elongation. Functionally, involved in peptide bond synthesis. Stimulates efficient translation and peptide-bond synthesis on native or reconstituted 70S ribosomes in vitro. Probably functions indirectly by altering the affinity of the ribosome for aminoacyl-tRNA, thus increasing their reactivity as acceptors for peptidyl transferase. The polypeptide is Elongation factor P (Enterococcus faecalis (strain ATCC 700802 / V583)).